The primary structure comprises 329 residues: Ribosomal RNA small subunit methyltransferase H (329 aa).

S-adenosyl-L-methionine-binding positions include 44-46 (GGY), Asp62, Asp110, and Gln117. Residues 297-329 (APAELAANPRARSARLRSAERTSAPARRLGDAA) form a disordered region.

This sequence belongs to the methyltransferase superfamily. RsmH family.

It localises to the cytoplasm. The enzyme catalyses cytidine(1402) in 16S rRNA + S-adenosyl-L-methionine = N(4)-methylcytidine(1402) in 16S rRNA + S-adenosyl-L-homocysteine + H(+). In terms of biological role, specifically methylates the N4 position of cytidine in position 1402 (C1402) of 16S rRNA. This chain is Ribosomal RNA small subunit methyltransferase H, found in Rhodospirillum centenum (strain ATCC 51521 / SW).